A 400-amino-acid chain; its full sequence is Tryptophan synthase beta chain (400 aa).

K91 is modified (N6-(pyridoxal phosphate)lysine).

Belongs to the TrpB family. In terms of assembly, tetramer of two alpha and two beta chains. Pyridoxal 5'-phosphate serves as cofactor.

The enzyme catalyses (1S,2R)-1-C-(indol-3-yl)glycerol 3-phosphate + L-serine = D-glyceraldehyde 3-phosphate + L-tryptophan + H2O. The protein operates within amino-acid biosynthesis; L-tryptophan biosynthesis; L-tryptophan from chorismate: step 5/5. The beta subunit is responsible for the synthesis of L-tryptophan from indole and L-serine. The sequence is that of Tryptophan synthase beta chain from Listeria monocytogenes serovar 1/2a (strain ATCC BAA-679 / EGD-e).